A 241-amino-acid polypeptide reads, in one-letter code: MSELLQAQSLFKSYRRRVVVRDVSVQVATGEVVGLLGPNGAGKTTTFYMMVGLVRPDRGHIFLQQRDITALPMHERARMGLGYLPQEPSVFRQMSAADNVLAVLETLPLSPVERQERQEQLLSELHLHALRDTKGHSLSGGERRRVEIARALAMSPRFILLDEPFAGIDPISVLEIQRLIRDLRARGIGVLITDHNVRETLGICERAYILHDGKVLTAGSPQEIVDDPMVRQVYLGDQFQI.

Positions 5–237 (LQAQSLFKSY…PMVRQVYLGD (233 aa)) constitute an ABC transporter domain. Residue 37-44 (GPNGAGKT) coordinates ATP.

Belongs to the ABC transporter superfamily. Outer membrane lipopolysaccharide export (TC 1.B.42) family. As to quaternary structure, component of the lipopolysaccharide transport and assembly complex. The LptBFG transporter is composed of two ATP-binding proteins (LptB) and two transmembrane proteins (LptF and LptG).

Its subcellular location is the cytoplasm. The protein localises to the cell inner membrane. Functionally, part of the ABC transporter complex LptBFG involved in the translocation of lipopolysaccharide (LPS) from the inner membrane to the outer membrane. Probably responsible for energy coupling to the transport system. The polypeptide is Lipopolysaccharide export system ATP-binding protein LptB (lptB) (Acidithiobacillus ferridurans).